Reading from the N-terminus, the 405-residue chain is Formin-like protein 15a (405 aa).

Positions 1 to 31 (MSLVEISGSDAMAAPMPGRVPPPPPRPPPMP) are disordered. Pro residues predominate over residues 18 to 31 (GRVPPPPPRPPPMP). Residues 52 to 405 (FPRPAKKRAS…VCWFFVRLMI (354 aa)) form the FH2 domain.

It belongs to the formin-like family. Class-II subfamily.

The chain is Formin-like protein 15a (FH15A) from Arabidopsis thaliana (Mouse-ear cress).